Reading from the N-terminus, the 253-residue chain is FGFR1 oncogene partner 2 homolog (253 aa).

Residues 5–104 (IEKALADAKA…SALELIMSKY (100 aa)) adopt a coiled-coil conformation. S140 bears the Phosphoserine mark. Residues 160-223 (LERRHLEANQ…LREILQITRE (64 aa)) are a coiled coil. The disordered stretch occupies residues 231-253 (DDASESTSLSALVTNSDLSLRKS). The segment covering 235-253 (ESTSLSALVTNSDLSLRKS) has biased composition (polar residues).

The protein belongs to the SIKE family.

Its subcellular location is the cytoplasm. Functionally, may be involved in wound healing pathway. The polypeptide is FGFR1 oncogene partner 2 homolog (Fgfr1op2) (Mus musculus (Mouse)).